Consider the following 138-residue polypeptide: Thyrotropin subunit beta (138 aa).

Residues 1–20 (MTALFLMSMLFGLTCGQAMS) form the signal peptide. Intrachain disulfides connect Cys-22/Cys-72, Cys-36/Cys-87, Cys-39/Cys-125, Cys-47/Cys-103, Cys-51/Cys-105, and Cys-108/Cys-115. The N-linked (GlcNAc...) asparagine glycan is linked to Asn-43. Positions 133–138 (LVGFSV) are excised as a propeptide.

Belongs to the glycoprotein hormones subunit beta family. Heterodimer of a common alpha chain and a unique beta chain which confers biological specificity to thyrotropin, lutropin, follitropin and gonadotropin.

The protein resides in the secreted. Its function is as follows. Indispensable for the control of thyroid structure and metabolism. The chain is Thyrotropin subunit beta (TSHB) from Homo sapiens (Human).